We begin with the raw amino-acid sequence, 205 residues long: DUF724 domain-containing protein 4 (205 aa).

Residues 28-59 (DASGRGKRRRVEQEHHSDLNNETAAPTGGSAG) are disordered. The region spanning 63 to 189 (VLPFTKTLAS…MADDYSKLKK (127 aa)) is the DUF724 domain.

In terms of tissue distribution, expressed in roots, leaves, stems, flowers and siliques.

It localises to the nucleus. May be involved in the polar growth of plant cells via transportation of RNAs. The chain is DUF724 domain-containing protein 4 from Arabidopsis thaliana (Mouse-ear cress).